The chain runs to 185 residues: MTTVTAQQQAELIKNSIKSIPDYPKPGILFRDVTSLLEDPVAYAASIDMLANRYRNTGVTKVVGTEARGFLFGAPVALALGVGFVPVRKPGKLPRPTISESYELEYGSDTLEIHADAISAGDNVLVIDDLLATGGTLEATVKLIRRLGGTVNDAAFIINLFDLGGEQRLTEMGVTCYSLVDFPGH.

This sequence belongs to the purine/pyrimidine phosphoribosyltransferase family. As to quaternary structure, homodimer.

It localises to the cytoplasm. The enzyme catalyses AMP + diphosphate = 5-phospho-alpha-D-ribose 1-diphosphate + adenine. The protein operates within purine metabolism; AMP biosynthesis via salvage pathway; AMP from adenine: step 1/1. Catalyzes a salvage reaction resulting in the formation of AMP, that is energically less costly than de novo synthesis. This is Adenine phosphoribosyltransferase from Pectobacterium atrosepticum (strain SCRI 1043 / ATCC BAA-672) (Erwinia carotovora subsp. atroseptica).